The primary structure comprises 376 residues: Succinyl-diaminopimelate desuccinylase (376 aa).

Residue histidine 67 coordinates Zn(2+). The active site involves aspartate 69. Aspartate 100 provides a ligand contact to Zn(2+). Residue glutamate 134 is the Proton acceptor of the active site. Zn(2+) contacts are provided by glutamate 135, glutamate 163, and histidine 349.

This sequence belongs to the peptidase M20A family. DapE subfamily. In terms of assembly, homodimer. It depends on Zn(2+) as a cofactor. Co(2+) serves as cofactor.

The catalysed reaction is N-succinyl-(2S,6S)-2,6-diaminopimelate + H2O = (2S,6S)-2,6-diaminopimelate + succinate. The protein operates within amino-acid biosynthesis; L-lysine biosynthesis via DAP pathway; LL-2,6-diaminopimelate from (S)-tetrahydrodipicolinate (succinylase route): step 3/3. Its function is as follows. Catalyzes the hydrolysis of N-succinyl-L,L-diaminopimelic acid (SDAP), forming succinate and LL-2,6-diaminopimelate (DAP), an intermediate involved in the bacterial biosynthesis of lysine and meso-diaminopimelic acid, an essential component of bacterial cell walls. This Xanthomonas campestris pv. campestris (strain 8004) protein is Succinyl-diaminopimelate desuccinylase.